A 360-amino-acid chain; its full sequence is Phospho-N-acetylmuramoyl-pentapeptide-transferase (360 aa).

Helical transmembrane passes span 18–38 (VFSY…FLSL), 72–92 (PTMG…MWAY), 94–114 (SNPY…VGFV), 132–152 (WKYF…YAVG), 168–188 (IMPQ…VGTS), 199–219 (GLAI…AWAT), 236–256 (AGEL…FLWF), 263–283 (VFMG…IAVL), 288–308 (FLLL…ILQV), and 338–358 (VIVR…ATLK).

This sequence belongs to the glycosyltransferase 4 family. MraY subfamily. Mg(2+) is required as a cofactor.

It localises to the cell inner membrane. The enzyme catalyses UDP-N-acetyl-alpha-D-muramoyl-L-alanyl-gamma-D-glutamyl-meso-2,6-diaminopimeloyl-D-alanyl-D-alanine + di-trans,octa-cis-undecaprenyl phosphate = di-trans,octa-cis-undecaprenyl diphospho-N-acetyl-alpha-D-muramoyl-L-alanyl-D-glutamyl-meso-2,6-diaminopimeloyl-D-alanyl-D-alanine + UMP. The protein operates within cell wall biogenesis; peptidoglycan biosynthesis. Its function is as follows. Catalyzes the initial step of the lipid cycle reactions in the biosynthesis of the cell wall peptidoglycan: transfers peptidoglycan precursor phospho-MurNAc-pentapeptide from UDP-MurNAc-pentapeptide onto the lipid carrier undecaprenyl phosphate, yielding undecaprenyl-pyrophosphoryl-MurNAc-pentapeptide, known as lipid I. This chain is Phospho-N-acetylmuramoyl-pentapeptide-transferase, found in Serratia proteamaculans (strain 568).